Reading from the N-terminus, the 347-residue chain is S-adenosylmethionine:tRNA ribosyltransferase-isomerase (347 aa).

It belongs to the QueA family. As to quaternary structure, monomer.

It is found in the cytoplasm. It catalyses the reaction 7-aminomethyl-7-carbaguanosine(34) in tRNA + S-adenosyl-L-methionine = epoxyqueuosine(34) in tRNA + adenine + L-methionine + 2 H(+). The protein operates within tRNA modification; tRNA-queuosine biosynthesis. In terms of biological role, transfers and isomerizes the ribose moiety from AdoMet to the 7-aminomethyl group of 7-deazaguanine (preQ1-tRNA) to give epoxyqueuosine (oQ-tRNA). In Bordetella pertussis (strain Tohama I / ATCC BAA-589 / NCTC 13251), this protein is S-adenosylmethionine:tRNA ribosyltransferase-isomerase.